A 177-amino-acid polypeptide reads, in one-letter code: CDP-archaeol synthase (177 aa).

Transmembrane regions (helical) follow at residues 6 to 26 (LFAS…ACIF), 54 to 74 (CIFG…LVDF), 90 to 110 (VILA…GSFI), 124 to 144 (LLDQ…VAPI), and 148 to 168 (MIII…IIAY).

Belongs to the CDP-archaeol synthase family. It depends on Mg(2+) as a cofactor.

It localises to the cell membrane. It carries out the reaction 2,3-bis-O-(geranylgeranyl)-sn-glycerol 1-phosphate + CTP + H(+) = CDP-2,3-bis-O-(geranylgeranyl)-sn-glycerol + diphosphate. The protein operates within membrane lipid metabolism; glycerophospholipid metabolism. Functionally, catalyzes the formation of CDP-2,3-bis-(O-geranylgeranyl)-sn-glycerol (CDP-archaeol) from 2,3-bis-(O-geranylgeranyl)-sn-glycerol 1-phosphate (DGGGP) and CTP. This reaction is the third ether-bond-formation step in the biosynthesis of archaeal membrane lipids. The chain is CDP-archaeol synthase from Methanocaldococcus jannaschii (strain ATCC 43067 / DSM 2661 / JAL-1 / JCM 10045 / NBRC 100440) (Methanococcus jannaschii).